The chain runs to 370 residues: Dual-specificity RNA methyltransferase RlmN (370 aa).

Catalysis depends on Glu-93, which acts as the Proton acceptor. The Radical SAM core domain maps to 99–331; the sequence is DRKRGTLCVS…TRVRRTRGDD (233 aa). Residues Cys-106 and Cys-336 are joined by a disulfide bond. [4Fe-4S] cluster is bound by residues Cys-113, Cys-117, and Cys-120. S-adenosyl-L-methionine-binding positions include 162-163, Ser-194, 216-218, and Asn-293; these read GE and SLH. Residue Cys-336 is the S-methylcysteine intermediate of the active site.

This sequence belongs to the radical SAM superfamily. RlmN family. The cofactor is [4Fe-4S] cluster.

The protein resides in the cytoplasm. The catalysed reaction is adenosine(2503) in 23S rRNA + 2 reduced [2Fe-2S]-[ferredoxin] + 2 S-adenosyl-L-methionine = 2-methyladenosine(2503) in 23S rRNA + 5'-deoxyadenosine + L-methionine + 2 oxidized [2Fe-2S]-[ferredoxin] + S-adenosyl-L-homocysteine. It catalyses the reaction adenosine(37) in tRNA + 2 reduced [2Fe-2S]-[ferredoxin] + 2 S-adenosyl-L-methionine = 2-methyladenosine(37) in tRNA + 5'-deoxyadenosine + L-methionine + 2 oxidized [2Fe-2S]-[ferredoxin] + S-adenosyl-L-homocysteine. Its function is as follows. Specifically methylates position 2 of adenine 2503 in 23S rRNA and position 2 of adenine 37 in tRNAs. m2A2503 modification seems to play a crucial role in the proofreading step occurring at the peptidyl transferase center and thus would serve to optimize ribosomal fidelity. The sequence is that of Dual-specificity RNA methyltransferase RlmN from Coxiella burnetii (strain CbuK_Q154) (Coxiella burnetii (strain Q154)).